The chain runs to 29 residues: NEGKAKCGNTAGSKLTFKSADECTKTGQK.

It is found in the secreted. It localises to the nematocyst. Its subcellular location is the target cell membrane. Its function is as follows. Cytolysin that shows moderate hemolysis and moderate myonecrosis. The protein is Cytolysin Oshem 1 of Olindias sambaquiensis (Hydromedusa).